Consider the following 361-residue polypeptide: Peptide chain release factor 1 (361 aa).

Q240 is modified (N5-methylglutamine).

The protein belongs to the prokaryotic/mitochondrial release factor family. In terms of processing, methylated by PrmC. Methylation increases the termination efficiency of RF1.

It localises to the cytoplasm. Functionally, peptide chain release factor 1 directs the termination of translation in response to the peptide chain termination codons UAG and UAA. The chain is Peptide chain release factor 1 from Mycobacterium leprae (strain Br4923).